Reading from the N-terminus, the 189-residue chain is UPF0301 protein PP_4995 (189 aa).

Belongs to the UPF0301 (AlgH) family.

This is UPF0301 protein PP_4995 from Pseudomonas putida (strain ATCC 47054 / DSM 6125 / CFBP 8728 / NCIMB 11950 / KT2440).